The chain runs to 110 residues: UPF0367 protein sync_2587 (110 aa).

It belongs to the UPF0367 family.

The protein is UPF0367 protein sync_2587 of Synechococcus sp. (strain CC9311).